We begin with the raw amino-acid sequence, 236 residues long: Class B acid phosphatase (236 aa).

The N-terminal stretch at 1-22 is a signal peptide; sequence MKNVMKLSVIALLTAAAVPAMA. The Nucleophile role is filled by Asp-67. Asp-67 and Asp-69 together coordinate Mg(2+). Asp-69 acts as the Proton donor in catalysis. Residues 136 to 137 and Lys-176 contribute to the substrate site; that span reads TG. Residue Asp-191 coordinates Mg(2+).

Belongs to the class B bacterial acid phosphatase family. Homotetramer. The cofactor is Mg(2+).

The protein localises to the periplasm. It catalyses the reaction a phosphate monoester + H2O = an alcohol + phosphate. In terms of biological role, dephosphorylates several organic phosphate monoesters. Also has a phosphotransferase activity catalyzing the transfer of low-energy phosphate groups from organic phosphate monoesters to free hydroxyl groups of various organic compounds. This is Class B acid phosphatase (aphA) from Haemophilus influenzae (strain ATCC 51907 / DSM 11121 / KW20 / Rd).